A 308-amino-acid chain; its full sequence is N-acetylmuramic acid 6-phosphate etherase (308 aa).

Positions 62-225 (TAARLRQGGR…STGVMVQLGK (164 aa)) constitute an SIS domain. E90 functions as the Proton donor in the catalytic mechanism. Residue E121 is part of the active site.

The protein belongs to the GCKR-like family. MurNAc-6-P etherase subfamily. Homodimer.

It catalyses the reaction N-acetyl-D-muramate 6-phosphate + H2O = N-acetyl-D-glucosamine 6-phosphate + (R)-lactate. It participates in amino-sugar metabolism; N-acetylmuramate degradation. Functionally, specifically catalyzes the cleavage of the D-lactyl ether substituent of MurNAc 6-phosphate, producing GlcNAc 6-phosphate and D-lactate. In Thermosynechococcus vestitus (strain NIES-2133 / IAM M-273 / BP-1), this protein is N-acetylmuramic acid 6-phosphate etherase.